The sequence spans 420 residues: Protein-lysine 6-oxidase (420 aa).

The N-terminal stretch at 1–27 is a signal peptide; it reads MRCAPPGLLLAQLHACIFWSGLWPAGC. Positions 28 to 171 are cleaved as a propeptide — removed by BMP1; the sequence is QSPPAAWRQR…RPGREDVMVG (144 aa). The segment at 54 to 177 is disordered; it reads AQYQPPRRRQ…VMVGDDPYSP (124 aa). An N-linked (GlcNAc...) asparagine glycan is attached at N78. The segment covering 82-92 has biased composition (low complexity); that stretch reads PRAAAAAAARP. A compositionally biased stretch (pro residues) spans 93-105; the sequence is QPEPQPQAQPQPR. Basic residues-rich tracts occupy residues 107 to 119 and 134 to 147; these read RSSR…RRHW and APRR…SRRR. Residue Y190 is modified to Sulfotyrosine. Residues 216-420 form a lysyl-oxidase like region; it reads PDLVPDPYYI…YASGCTISPY (205 aa). 5 disulfide bridges follow: C241-C247, C294-C343, C327-C333, C354-C364, and C401-C415. 3 residues coordinate Cu cation: H295, H297, and H299. Residues 323–358 constitute a cross-link (lysine tyrosylquinone (Lys-Tyr)); sequence KASFCLEDTSCDYGYYRRYACTAHTQGLSPGCYDTY. Position 358 is a 2',4',5'-topaquinone (Y358).

The protein belongs to the lysyl oxidase family. The cofactor is Cu cation. It depends on lysine tyrosylquinone residue as a cofactor. Post-translationally, the lysine tyrosylquinone cross-link (LTQ) is generated by condensation of the epsilon-amino group of a lysine with a topaquinone produced by oxidation of tyrosine. In terms of processing, proteolytically cleaved by BMP1 which removes the propeptide. Also proteolytically cleaved by ADAMTS2 and ADAMTS14, but not by ADAMTS3, at an additional cleavage site downstream of the BMP1 cleavage site. The propeptide plays a role in directing the deposition of this enzyme to elastic fibers, via interaction with tropoelastin. Cleavage by BMP1 to remove the propeptide does not increase enzymatic activity but increases binding to collagen. Cleavage by ADAMTS2 produces a form with reduced collagen-binding activity. Sulfated at Tyr-190 and also at either Tyr-186 or Tyr-187 which enhances binding to collagen.

The protein localises to the secreted. Its subcellular location is the extracellular space. It catalyses the reaction L-lysyl-[protein] + O2 + H2O = (S)-2-amino-6-oxohexanoyl-[protein] + H2O2 + NH4(+). Responsible for the post-translational oxidative deamination of peptidyl lysine residues in precursors to fibrous collagen and elastin. Its function is as follows. In addition to cross linking of extracellular matrix proteins, it may have a direct role in tumor suppression. This Gallus gallus (Chicken) protein is Protein-lysine 6-oxidase (LOX).